A 448-amino-acid chain; its full sequence is Divalent metal cation transporter MntH (448 aa).

11 helical membrane passes run 41-61 (LFAF…PGNW), 69-89 (SEFG…AVLL), 117-137 (GFVL…AEVI), 147-167 (FGIP…LVLF), 176-196 (IEVI…AEMV), 215-235 (IVTN…TVMP), 270-290 (FSLT…AAAF), 307-327 (LLNP…ALLA), 363-383 (VLAI…GINE), 384-404 (LLIF…IPLV), and 424-444 (IVSW…LFYT).

It belongs to the NRAMP family.

It is found in the cell membrane. H(+)-stimulated, divalent metal cation uptake system. The chain is Divalent metal cation transporter MntH from Listeria innocua serovar 6a (strain ATCC BAA-680 / CLIP 11262).